A 218-amino-acid chain; its full sequence is Pyridoxine/pyridoxamine 5'-phosphate oxidase (218 aa).

Residues 14 to 17 (RREY) and Lys72 contribute to the substrate site. Residues 67-72 (RIVLLK), 82-83 (YT), Arg88, Lys89, and Gln111 contribute to the FMN site. Positions 129, 133, and 137 each coordinate substrate. FMN-binding positions include 146 to 147 (QS) and Trp191. 197-199 (RLH) is a substrate binding site. Arg201 contributes to the FMN binding site.

Belongs to the pyridoxamine 5'-phosphate oxidase family. As to quaternary structure, homodimer. It depends on FMN as a cofactor.

The enzyme catalyses pyridoxamine 5'-phosphate + O2 + H2O = pyridoxal 5'-phosphate + H2O2 + NH4(+). The catalysed reaction is pyridoxine 5'-phosphate + O2 = pyridoxal 5'-phosphate + H2O2. It functions in the pathway cofactor metabolism; pyridoxal 5'-phosphate salvage; pyridoxal 5'-phosphate from pyridoxamine 5'-phosphate: step 1/1. The protein operates within cofactor metabolism; pyridoxal 5'-phosphate salvage; pyridoxal 5'-phosphate from pyridoxine 5'-phosphate: step 1/1. Functionally, catalyzes the oxidation of either pyridoxine 5'-phosphate (PNP) or pyridoxamine 5'-phosphate (PMP) into pyridoxal 5'-phosphate (PLP). In Escherichia coli (strain SMS-3-5 / SECEC), this protein is Pyridoxine/pyridoxamine 5'-phosphate oxidase.